The chain runs to 99 residues: MLIDFCCSYIAGTHGRERAPSFTGTFVSHVSAENNCRPRRSEITQPCASGTEKKHFAATEKQCTNSLEGSRKDFLSLPLGHSYLFLFCFWRMICSEPKL.

This is an uncharacterized protein from Saccharomyces cerevisiae (strain ATCC 204508 / S288c) (Baker's yeast).